Reading from the N-terminus, the 295-residue chain is HTH-type transcriptional regulator TfdS (295 aa).

The HTH lysR-type domain maps to 1–58; it reads MEFRQLRYFVAAAEEGNVGAAARRLHISQPPVTRQIHALEQHLGVLLFERSARGVQLT. Positions 18-37 form a DNA-binding region, H-T-H motif; that stretch reads VGAAARRLHISQPPVTRQIH.

The protein belongs to the LysR transcriptional regulatory family.

It localises to the cytoplasm. Involved in the regulation of 3-chlorocatechol degradation. Transcriptional regulator of tfdB expression. Acts as a repressor in the absence of its effector (either 2-cis-chlorodiene lactone or chloromaleylacetate) but acts as an activator when its effector is present. The sequence is that of HTH-type transcriptional regulator TfdS (tfdS) from Cupriavidus pinatubonensis (strain JMP 134 / LMG 1197) (Cupriavidus necator (strain JMP 134)).